Here is a 343-residue protein sequence, read N- to C-terminus: Cilia- and flagella-associated protein 36 (343 aa).

Phosphoserine occurs at positions 85 and 147. Positions 147-181 (SDLEQEEMKILREVLRKSKEEYDQEEERKRKKQSS) form a coiled coil. The disordered stretch occupies residues 165–191 (KEEYDQEEERKRKKQSSEGKMEEPPIY). The residue at position 201 (serine 201) is a Phosphoserine. The disordered stretch occupies residues 286 to 323 (SMRKDMRAKQIQNTEQKGKPTREAEEMTEKPEMTAEEK). A compositionally biased stretch (basic and acidic residues) spans 301 to 323 (QKGKPTREAEEMTEKPEMTAEEK).

The protein belongs to the CFAP36 family. As to quaternary structure, interacts with ARL3. Widely expressed (at protein level).

The protein resides in the nucleus. Its subcellular location is the cytoplasm. The protein localises to the cell projection. It localises to the cilium. It is found in the flagellum. Its function is as follows. May act as an effector for ARL3. This is Cilia- and flagella-associated protein 36 from Rattus norvegicus (Rat).